Consider the following 120-residue polypeptide: MPNKQFRVERLAQQIQREVDDILLKRVRDPRVNGVTVTGVDVTGDLQQATIYYTILSKLASDAEKTQTGLDKATGLVRSELGSRLNIFKAPEIKFVRDPSIEYGSRIDELLNELHKNNEL.

Belongs to the RbfA family. As to quaternary structure, monomer. Binds 30S ribosomal subunits, but not 50S ribosomal subunits or 70S ribosomes.

It localises to the cytoplasm. In terms of biological role, one of several proteins that assist in the late maturation steps of the functional core of the 30S ribosomal subunit. Associates with free 30S ribosomal subunits (but not with 30S subunits that are part of 70S ribosomes or polysomes). Required for efficient processing of 16S rRNA. May interact with the 5'-terminal helix region of 16S rRNA. This is Ribosome-binding factor A from Limosilactobacillus fermentum (strain NBRC 3956 / LMG 18251) (Lactobacillus fermentum).